A 94-amino-acid chain; its full sequence is Neutrophil defensin 3 (94 aa).

Positions Met-1–Ala-19 are cleaved as a signal peptide. A propeptide spanning residues Glu-20–Ala-38 is cleaved from the precursor. Intrachain disulfides connect Cys-66–Cys-94, Cys-68–Cys-83, and Cys-73–Cys-93.

Belongs to the alpha-defensin family. As to quaternary structure, dimer. In terms of assembly, (Microbial infection) Interacts with herpes virus 1 HHV-1 envelope glycoprotein B; this interaction inhibits viral infection.

It localises to the secreted. Functionally, effector molecule of the innate immune system that acts via antibiotic-like properties against a broad array of infectious agents including bacteria, fungi, and viruses. Possesses the ability to neutralize bacterial toxins such as B.anthracis lethal factor, Clostridium difficile cytotoxin B as well as leukocidin produced by Staphylococcus aureus. Also blocks herpes simplex virus infection by interacting with envelope glycoprotein B and thus preventing its binding to heparan sulfate, the receptor for attachment. This chain is Neutrophil defensin 3 (DEFA3), found in Homo sapiens (Human).